The sequence spans 245 residues: 5-oxoprolinase subunit A (245 aa).

The protein belongs to the LamB/PxpA family. As to quaternary structure, forms a complex composed of PxpA, PxpB and PxpC.

The enzyme catalyses 5-oxo-L-proline + ATP + 2 H2O = L-glutamate + ADP + phosphate + H(+). In terms of biological role, catalyzes the cleavage of 5-oxoproline to form L-glutamate coupled to the hydrolysis of ATP to ADP and inorganic phosphate. The sequence is that of 5-oxoprolinase subunit A from Chromobacterium violaceum (strain ATCC 12472 / DSM 30191 / JCM 1249 / CCUG 213 / NBRC 12614 / NCIMB 9131 / NCTC 9757 / MK).